A 241-amino-acid polypeptide reads, in one-letter code: Phosphatidylglycerophosphatase B (241 aa).

Residues 1–21 (MFKRLSLYTLLLCLVPFFIWG) form a helical membrane-spanning segment. At 22–52 (ISYQWHGNSQLTQADYWLYLLTETGSVPYAL) the chain is on the periplasmic side. Residues 53–62 (ITCVLFTLLF) form a helical membrane-spanning segment. Residues 63–67 (AFLFK) are Cytoplasmic-facing. A helical membrane pass occupies residues 68 to 91 (NPKQWILGVIVMGISVIATQAAKT). Topologically, residues 92–158 (GAKALFEEPR…ENETGYSFPS (67 aa)) are periplasmic. Positions 94 to 102 (KALFEEPRP) are phosphatase sequence motif I. The segment at 157–160 (PSGH) is phosphatase sequence motif II. The chain crosses the membrane as a helical span at residues 159–173 (GHTIFAATWLMLAVG). His160 functions as the Proton donor; for a subset of substrates in the catalytic mechanism. Over 174 to 184 (FTQLLGNRSFK) the chain is Cytoplasmic. A helical membrane pass occupies residues 185 to 204 (AKLLVVGIAVWGLLMLISRV). A phosphatase sequence motif III region spans residues 202 to 213 (SRVRLGMHYPID). At 205–210 (RLGMHY) the chain is on the periplasmic side. Catalysis depends on His209, which acts as the Nucleophile. The helical transmembrane segment at 211-235 (PIDLLVATLLAWLINSIIFAFLKKK) threads the bilayer. Over 236–241 (AIFVMK) the chain is Cytoplasmic.

It belongs to the PA-phosphatase related phosphoesterase family.

It is found in the cell inner membrane. The protein resides in the cell outer membrane. It catalyses the reaction a 1,2-diacyl-sn-glycero-3-phospho-(1'-sn-glycero-3'-phosphate) + H2O = a 1,2-diacyl-sn-glycero-3-phospho-(1'-sn-glycerol) + phosphate. It carries out the reaction a 1,2-diacyl-sn-glycerol 3-diphosphate + H2O = a 1,2-diacyl-sn-glycero-3-phosphate + phosphate + H(+). The catalysed reaction is a 1,2-diacyl-sn-glycero-3-phosphate + H2O = a 1,2-diacyl-sn-glycerol + phosphate. The enzyme catalyses di-trans,octa-cis-undecaprenyl diphosphate + H2O = di-trans,octa-cis-undecaprenyl phosphate + phosphate + H(+). It functions in the pathway phospholipid metabolism; phosphatidylglycerol biosynthesis; phosphatidylglycerol from CDP-diacylglycerol: step 2/2. Catalyzes the dephosphorylation of diacylglycerol diphosphate (DGPP) to phosphatidate (PA) and the subsequent dephosphorylation of PA to diacylglycerol (DAG). Also has undecaprenyl pyrophosphate phosphatase activity, required for the biosynthesis of the lipid carrier undecaprenyl phosphate. Can also use lysophosphatidic acid (LPA) and phosphatidylglycerophosphate as substrates. The pattern of activities varies according to subcellular location, PGP phosphatase activity is higher in the cytoplasmic membrane, whereas PA and LPA phosphatase activities are higher in the outer membrane. Activity is independent of a divalent cation ion and insensitive to inhibition by N-ethylmaleimide. The chain is Phosphatidylglycerophosphatase B (pgpB) from Haemophilus influenzae (strain ATCC 51907 / DSM 11121 / KW20 / Rd).